A 218-amino-acid chain; its full sequence is Guanylate kinase (218 aa).

The Guanylate kinase-like domain maps to 14–193 (GLMLVLSSPS…AFAEVRGIVV (180 aa)). 21-28 (SPSGAGKS) contacts ATP.

This sequence belongs to the guanylate kinase family.

It localises to the cytoplasm. The catalysed reaction is GMP + ATP = GDP + ADP. Essential for recycling GMP and indirectly, cGMP. The polypeptide is Guanylate kinase (gmk) (Mesorhizobium japonicum (strain LMG 29417 / CECT 9101 / MAFF 303099) (Mesorhizobium loti (strain MAFF 303099))).